Reading from the N-terminus, the 356-residue chain is S-adenosylmethionine:tRNA ribosyltransferase-isomerase (356 aa).

This sequence belongs to the QueA family. Monomer.

It localises to the cytoplasm. It catalyses the reaction 7-aminomethyl-7-carbaguanosine(34) in tRNA + S-adenosyl-L-methionine = epoxyqueuosine(34) in tRNA + adenine + L-methionine + 2 H(+). It participates in tRNA modification; tRNA-queuosine biosynthesis. Its function is as follows. Transfers and isomerizes the ribose moiety from AdoMet to the 7-aminomethyl group of 7-deazaguanine (preQ1-tRNA) to give epoxyqueuosine (oQ-tRNA). The polypeptide is S-adenosylmethionine:tRNA ribosyltransferase-isomerase (Ralstonia nicotianae (strain ATCC BAA-1114 / GMI1000) (Ralstonia solanacearum)).